We begin with the raw amino-acid sequence, 602 residues long: Elongation factor 4 (602 aa).

The tr-type G domain maps to 8–189 (KNIRNFSIIA…KIITTIPAPS (182 aa)). Residues 20–25 (DHGKST) and 136–139 (NKID) contribute to the GTP site.

It belongs to the TRAFAC class translation factor GTPase superfamily. Classic translation factor GTPase family. LepA subfamily.

Its subcellular location is the cell inner membrane. It catalyses the reaction GTP + H2O = GDP + phosphate + H(+). Functionally, required for accurate and efficient protein synthesis under certain stress conditions. May act as a fidelity factor of the translation reaction, by catalyzing a one-codon backward translocation of tRNAs on improperly translocated ribosomes. Back-translocation proceeds from a post-translocation (POST) complex to a pre-translocation (PRE) complex, thus giving elongation factor G a second chance to translocate the tRNAs correctly. Binds to ribosomes in a GTP-dependent manner. The polypeptide is Elongation factor 4 (Helicobacter pylori (strain ATCC 700392 / 26695) (Campylobacter pylori)).